Here is a 154-residue protein sequence, read N- to C-terminus: Interleukin-2 (154 aa).

An N-terminal signal peptide occupies residues 1-20; it reads MYRMQLLSCIALSLALVTNS. Residue T23 is glycosylated (O-linked (GalNAc...) threonine). C78 and C126 are joined by a disulfide.

It belongs to the IL-2 family.

The protein resides in the secreted. Its function is as follows. Cytokine produced by activated CD4-positive helper T-cells and to a lesser extend activated CD8-positive T-cells and natural killer (NK) cells that plays pivotal roles in the immune response and tolerance. Binds to a receptor complex composed of either the high-affinity trimeric IL-2R (IL2RA/CD25, IL2RB/CD122 and IL2RG/CD132) or the low-affinity dimeric IL-2R (IL2RB and IL2RG). Interaction with the receptor leads to oligomerization and conformation changes in the IL-2R subunits resulting in downstream signaling starting with phosphorylation of JAK1 and JAK3. In turn, JAK1 and JAK3 phosphorylate the receptor to form a docking site leading to the phosphorylation of several substrates including STAT5. This process leads to activation of several pathways including STAT, phosphoinositide-3-kinase/PI3K and mitogen-activated protein kinase/MAPK pathways. Functions as a T-cell growth factor and can increase NK-cell cytolytic activity as well. Promotes strong proliferation of activated B-cells and subsequently immunoglobulin production. Plays a pivotal role in regulating the adaptive immune system by controlling the survival and proliferation of regulatory T-cells, which are required for the maintenance of immune tolerance. Moreover, participates in the differentiation and homeostasis of effector T-cell subsets, including Th1, Th2, Th17 as well as memory CD8-positive T-cells. The polypeptide is Interleukin-2 (IL2) (Papio anubis (Olive baboon)).